Here is a 98-residue protein sequence, read N- to C-terminus: NADH-ubiquinone oxidoreductase chain 4L (98 aa).

Helical transmembrane passes span 1 to 21, 28 to 48, and 59 to 79; these read MMSINLNLIMAFLLALAGVLI, STLLCLEGMMLSLFILMALLI, and APLILLVFSACEAGVGLALLV.

Belongs to the complex I subunit 4L family. In terms of assembly, core subunit of respiratory chain NADH dehydrogenase (Complex I) which is composed of 45 different subunits.

Its subcellular location is the mitochondrion inner membrane. The enzyme catalyses a ubiquinone + NADH + 5 H(+)(in) = a ubiquinol + NAD(+) + 4 H(+)(out). Core subunit of the mitochondrial membrane respiratory chain NADH dehydrogenase (Complex I) which catalyzes electron transfer from NADH through the respiratory chain, using ubiquinone as an electron acceptor. Part of the enzyme membrane arm which is embedded in the lipid bilayer and involved in proton translocation. The sequence is that of NADH-ubiquinone oxidoreductase chain 4L (MT-ND4L) from Lagorchestes hirsutus (Rufous hare-wallaby).